Reading from the N-terminus, the 500-residue chain is Glycerol kinase (500 aa).

Residue T13 participates in ADP binding. Residues T13, T14, and S15 each contribute to the ATP site. T13 lines the sn-glycerol 3-phosphate pocket. R17 is a binding site for ADP. Sn-glycerol 3-phosphate contacts are provided by R83, E84, Y135, and D244. 5 residues coordinate glycerol: R83, E84, Y135, D244, and Q245. ADP is bound by residues T266 and G309. Positions 266, 309, 313, and 410 each coordinate ATP. ADP-binding residues include G410 and N414.

The protein belongs to the FGGY kinase family.

The enzyme catalyses glycerol + ATP = sn-glycerol 3-phosphate + ADP + H(+). It participates in polyol metabolism; glycerol degradation via glycerol kinase pathway; sn-glycerol 3-phosphate from glycerol: step 1/1. Its activity is regulated as follows. Inhibited by fructose 1,6-bisphosphate (FBP). Its function is as follows. Key enzyme in the regulation of glycerol uptake and metabolism. Catalyzes the phosphorylation of glycerol to yield sn-glycerol 3-phosphate. This Burkholderia vietnamiensis (strain G4 / LMG 22486) (Burkholderia cepacia (strain R1808)) protein is Glycerol kinase.